We begin with the raw amino-acid sequence, 153 residues long: Arginine repressor (153 aa).

Belongs to the ArgR family.

It is found in the cytoplasm. Its pathway is amino-acid biosynthesis; L-arginine biosynthesis [regulation]. Functionally, regulates arginine biosynthesis genes. The chain is Arginine repressor from Haemophilus ducreyi (strain 35000HP / ATCC 700724).